The chain runs to 881 residues: Alanine--tRNA ligase (881 aa).

Zn(2+) is bound by residues His-566, His-570, Cys-668, and His-672.

The protein belongs to the class-II aminoacyl-tRNA synthetase family. The cofactor is Zn(2+).

The protein localises to the cytoplasm. It catalyses the reaction tRNA(Ala) + L-alanine + ATP = L-alanyl-tRNA(Ala) + AMP + diphosphate. Functionally, catalyzes the attachment of alanine to tRNA(Ala) in a two-step reaction: alanine is first activated by ATP to form Ala-AMP and then transferred to the acceptor end of tRNA(Ala). Also edits incorrectly charged Ser-tRNA(Ala) and Gly-tRNA(Ala) via its editing domain. The protein is Alanine--tRNA ligase of Frankia casuarinae (strain DSM 45818 / CECT 9043 / HFP020203 / CcI3).